Reading from the N-terminus, the 525-residue chain is GMP synthase [glutamine-hydrolyzing] (525 aa).

The Glutamine amidotransferase type-1 domain occupies 9–207; it reads RILILDFGSQ…VLDICQCEAL (199 aa). Cys-86 (nucleophile) is an active-site residue. Catalysis depends on residues His-181 and Glu-183. The 193-residue stretch at 208-400 folds into the GMPS ATP-PPase domain; the sequence is WTPATIIEDA…LGLPYDMLFR (193 aa). 235-241 contacts ATP; sequence SGGVDSS.

In terms of assembly, homodimer.

It carries out the reaction XMP + L-glutamine + ATP + H2O = GMP + L-glutamate + AMP + diphosphate + 2 H(+). It participates in purine metabolism; GMP biosynthesis; GMP from XMP (L-Gln route): step 1/1. Functionally, catalyzes the synthesis of GMP from XMP. The chain is GMP synthase [glutamine-hydrolyzing] from Serratia proteamaculans (strain 568).